A 91-amino-acid polypeptide reads, in one-letter code: Tachykinin-like peptide (91 aa).

The first 19 residues, 1–19, serve as a signal peptide directing secretion; that stretch reads MKILVAFAVIMLVSAQVLA. Residues 20-51 constitute a propeptide that is removed on maturation; it reads AEIGLNDEPEWYSDQIQEDLPVFENFLQRIAR. The residue at position 62 (methionine 62) is a Methionine amide. The segment at 64–91 is disordered; the sequence is KRNNGFGQMSRKRSAERNTIHNYERRRK. The propeptide occupies 66 to 91; that stretch reads NNGFGQMSRKRSAERNTIHNYERRRK. The span at 76–91 shows a compositional bias: basic and acidic residues; the sequence is RSAERNTIHNYERRRK.

In terms of tissue distribution, expressed by the skin glands.

The protein resides in the secreted. Its function is as follows. Tachykinins are active peptides which excite neurons, evoke behavioral responses, are potent vasodilators and secretagogues, and contract (directly or indirectly) many smooth muscles. In vitro, induces contraction of guinea pig ileum smooth muscle in a dose-dependent manner. This chain is Tachykinin-like peptide, found in Theloderma corticale (Kwangsi warty tree frog).